We begin with the raw amino-acid sequence, 361 residues long: Glyceraldehyde-3-phosphate dehydrogenase, glycosomal (361 aa).

Residues 13–14 (RI), Asp-39, and Arg-93 each bind NAD(+). D-glyceraldehyde 3-phosphate-binding positions include 166–168 (SCT), Thr-198, 227–228 (TG), and Arg-250. The Nucleophile role is filled by Cys-167. Position 336 (Asn-336) interacts with NAD(+). Positions 359 to 361 (SKL) match the Microbody targeting signal motif.

This sequence belongs to the glyceraldehyde-3-phosphate dehydrogenase family. Homotetramer.

It localises to the glycosome. It catalyses the reaction D-glyceraldehyde 3-phosphate + phosphate + NAD(+) = (2R)-3-phospho-glyceroyl phosphate + NADH + H(+). Its pathway is carbohydrate degradation; glycolysis; pyruvate from D-glyceraldehyde 3-phosphate: step 1/5. This Crithidia fasciculata protein is Glyceraldehyde-3-phosphate dehydrogenase, glycosomal (GAPDG).